The chain runs to 407 residues: Bifunctional enzyme IspD/IspF (407 aa).

The tract at residues 1 to 246 is 2-C-methyl-D-erythritol 4-phosphate cytidylyltransferase; the sequence is MQPLAEATTI…RQDHVSFPDI (246 aa). The segment at 247 to 407 is 2-C-methyl-D-erythritol 2,4-cyclodiphosphate synthase; sequence RTGNGYDVHS…TVIYPGEVPE (161 aa). Asp253 and His255 together coordinate a divalent metal cation. 4-CDP-2-C-methyl-D-erythritol 2-phosphate is bound by residues 253-255 and 279-280; these read DVH and HS. His287 is a binding site for a divalent metal cation. 4-CDP-2-C-methyl-D-erythritol 2-phosphate contacts are provided by residues 301–303, 377–380, Phe384, and Arg387; these read DIG and TTNE.

This sequence in the N-terminal section; belongs to the IspD/TarI cytidylyltransferase family. IspD subfamily. It in the C-terminal section; belongs to the IspF family. Requires a divalent metal cation as cofactor.

The enzyme catalyses 2-C-methyl-D-erythritol 4-phosphate + CTP + H(+) = 4-CDP-2-C-methyl-D-erythritol + diphosphate. The catalysed reaction is 4-CDP-2-C-methyl-D-erythritol 2-phosphate = 2-C-methyl-D-erythritol 2,4-cyclic diphosphate + CMP. It participates in isoprenoid biosynthesis; isopentenyl diphosphate biosynthesis via DXP pathway; isopentenyl diphosphate from 1-deoxy-D-xylulose 5-phosphate: step 2/6. Its pathway is isoprenoid biosynthesis; isopentenyl diphosphate biosynthesis via DXP pathway; isopentenyl diphosphate from 1-deoxy-D-xylulose 5-phosphate: step 4/6. In terms of biological role, bifunctional enzyme that catalyzes the formation of 4-diphosphocytidyl-2-C-methyl-D-erythritol from CTP and 2-C-methyl-D-erythritol 4-phosphate (MEP) (IspD), and catalyzes the conversion of 4-diphosphocytidyl-2-C-methyl-D-erythritol 2-phosphate (CDP-ME2P) to 2-C-methyl-D-erythritol 2,4-cyclodiphosphate (ME-CPP) with a corresponding release of cytidine 5-monophosphate (CMP) (IspF). This Brucella anthropi (strain ATCC 49188 / DSM 6882 / CCUG 24695 / JCM 21032 / LMG 3331 / NBRC 15819 / NCTC 12168 / Alc 37) (Ochrobactrum anthropi) protein is Bifunctional enzyme IspD/IspF.